We begin with the raw amino-acid sequence, 261 residues long: tRNA pseudouridine synthase A (261 aa).

Asp-51 acts as the Nucleophile in catalysis. Tyr-109 contacts substrate.

Belongs to the tRNA pseudouridine synthase TruA family. Homodimer.

It catalyses the reaction uridine(38/39/40) in tRNA = pseudouridine(38/39/40) in tRNA. In terms of biological role, formation of pseudouridine at positions 38, 39 and 40 in the anticodon stem and loop of transfer RNAs. The protein is tRNA pseudouridine synthase A of Shewanella baltica (strain OS155 / ATCC BAA-1091).